The following is a 306-amino-acid chain: Agmatinase (306 aa).

Residues His126, Asp149, His151, Asp153, Asp230, and Asp232 each contribute to the Mn(2+) site.

It belongs to the arginase family. Agmatinase subfamily. Requires Mn(2+) as cofactor.

It carries out the reaction agmatine + H2O = urea + putrescine. Its pathway is amine and polyamine biosynthesis; putrescine biosynthesis via agmatine pathway; putrescine from agmatine: step 1/1. In terms of biological role, catalyzes the formation of putrescine from agmatine. The protein is Agmatinase of Escherichia coli O1:K1 / APEC.